The primary structure comprises 102 residues: Iron-sulfur cluster assembly protein CyaY (102 aa).

Belongs to the frataxin family.

In terms of biological role, involved in iron-sulfur (Fe-S) cluster assembly. May act as a regulator of Fe-S biogenesis. The sequence is that of Iron-sulfur cluster assembly protein CyaY from Mannheimia succiniciproducens (strain KCTC 0769BP / MBEL55E).